The chain runs to 327 residues: MLCFWRTSHVAVLLIWGVFAAESSCPDKNQTMQNNSSTMTEVNTTVFVQMGKKALLCCPSISLTKVILITWTITLRGQPSCIISYKADTRETHESNCSDRSITWASTPDLAPDLQISAVALQHEGRYSCDIAVPDGNFQNIYDLQVLVPPEVTHFPGENRTAVCEAIAGKPAAQISWTPDGDCVAKNESHSNGTVTVRSTCHWEQSHVSVVFCVVSHLTTGNQSLSIELGRGGDQLLGSYIQYIIPSIIILIIIGCICLLKISGCRKCKLPKSGATPDIEEDEMQPYASYTEKSNPLYDTVTTTEAHPASQGKVNGTDCLTLSAMGI.

A signal peptide spans 1–23; it reads MLCFWRTSHVAVLLIWGVFAAES. The Extracellular portion of the chain corresponds to 24-239; it reads SCPDKNQTMQ…GRGGDQLLGS (216 aa). Positions 26 to 145 constitute an Ig-like V-type domain; that stretch reads PDKNQTMQNN…GNFQNIYDLQ (120 aa). N-linked (GlcNAc...) asparagine glycosylation is found at Asn29, Asn34, Asn43, Asn96, Asn159, Asn187, Asn192, and Asn222. Intrachain disulfides connect Cys58-Cys129 and Cys81-Cys97. Residues 147–226 form the Ig-like C2-type domain; it reads LVPPEVTHFP…HLTTGNQSLS (80 aa). 2 cysteine pairs are disulfide-bonded: Cys164/Cys213 and Cys183/Cys201. A helical transmembrane segment spans residues 240-260; that stretch reads YIQYIIPSIIILIIIGCICLL. Topologically, residues 261-327 are cytoplasmic; it reads KISGCRKCKL…DCLTLSAMGI (67 aa).

This sequence belongs to the CD200R family. CD200 and CD200R1 interact via their respective N-terminal Ig-like domains. Phosphorylated on tyrosine residues. Post-translationally, highly N-glycosylated. As to expression, restricted to cells of the myeloid lineage.

The protein localises to the cell membrane. Its function is as follows. Inhibitory receptor for the CD200/OX2 cell surface glycoprotein. Limits inflammation by inhibiting the expression of pro-inflammatory molecules including TNF-alpha, interferons, and inducible nitric oxide synthase (iNOS) in response to selected stimuli. The chain is Cell surface glycoprotein CD200 receptor 1 (Cd200r1) from Rattus norvegicus (Rat).